Here is a 506-residue protein sequence, read N- to C-terminus: Anaerobic nitric oxide reductase transcription regulator NorR (506 aa).

The residue at position 57 (aspartate 57) is a 4-aspartylphosphate. The region spanning 187–416 (MIGLSPAMTQ…LEHAIHRAVV (230 aa)) is the Sigma-54 factor interaction domain. ATP contacts are provided by residues 215–222 (GETGTGKE) and 278–287 (ADNGTLFLDE). Positions 481 to 500 (WAASARALETDVANLHRLAK) form a DNA-binding region, H-T-H motif.

It participates in nitrogen metabolism; nitric oxide reduction. In terms of biological role, required for the expression of anaerobic nitric oxide (NO) reductase, acts as a transcriptional activator for at least the norVW operon. Activation also requires sigma-54. The sequence is that of Anaerobic nitric oxide reductase transcription regulator NorR from Salmonella gallinarum (strain 287/91 / NCTC 13346).